Here is a 474-residue protein sequence, read N- to C-terminus: Calcium/calmodulin-dependent protein kinase type IV (474 aa).

Residues Ser-11 and Ser-12 each carry the phosphoserine; by autocatalysis modification. A Protein kinase domain is found at 42–296 (FEVESELGRG…TFQALQHPWV (255 aa)). Residues 48-56 (LGRGATSIV) and Lys-71 contribute to the ATP site. The O-linked (GlcNAc) threonine glycan is linked to Thr-53. Ser-54 is a glycosylation site (O-linked (GlcNAc) serine). A glycan (O-linked (GlcNAc) serine) is linked at Ser-133. The active-site Proton acceptor is the Asp-160. Ser-185 carries O-linked (GlcNAc) serine glycosylation. Position 196 is a phosphothreonine; by CaMKK1 and CaMKK2 (Thr-196). The tract at residues 297-336 (TGKAANFVHMDTAQKKLQEFNARRKLKAAVKAVVASSRLG) is autoinhibitory domain. Residues 302 to 319 (NFVHMDTAQKKLQEFNAR) form a PP2A-binding region. Residues 318-337 (ARRKLKAAVKAVVASSRLGS) are calmodulin-binding. Phosphoserine; by autocatalysis is present on Ser-332. Residues 336-474 (GSASSSHTNI…PQQDAILPEY (139 aa)) are disordered. Residue Ser-337 is modified to Phosphoserine. O-linked (GlcNAc) serine glycans are attached at residues Ser-340, Ser-341, and Ser-352. A compositionally biased stretch (polar residues) spans 342 to 356 (HTNIQESNKASSEAQ). Basic and acidic residues predominate over residues 360-392 (DGKDKTDPLENKMQAGDHEAAKAAADETMKLQS). Residues 393 to 413 (EEVEEEEGVKEEEEEEEEEEE) are compositionally biased toward acidic residues. Residues 431 to 454 (QEMKRNSEETLKSVEEEMDPKAEE) show a composition bias toward basic and acidic residues. Phosphoserine is present on residues Ser-437 and Ser-443.

Belongs to the protein kinase superfamily. CAMK Ser/Thr protein kinase family. CaMK subfamily. In terms of assembly, monomer. Interacts with protein phosphatase 2A (PPP2CA/PPP2CB); the interaction is mutually exclusive with binding to Ca(2+)/calmodulin. Phosphorylated by CaMKK1 and CaMKK2 on Thr-196. Dephosphorylated by protein phosphatase 2A. Autophosphorylated on Ser-11 and Ser-12. In terms of processing, glycosylation at Ser-185 modulates the phosphorylation of CaMK4 at Thr-196 and negatively regulates its activity toward CREB1 in basal conditions and during early inomycin stimulation. Post-translationally, the N-terminus of calspermin is blocked. In terms of tissue distribution, isoform 1 is expressed in brain and isoform 2 is testis specific.

The protein resides in the cytoplasm. Its subcellular location is the nucleus. The catalysed reaction is L-seryl-[protein] + ATP = O-phospho-L-seryl-[protein] + ADP + H(+). The enzyme catalyses L-threonyl-[protein] + ATP = O-phospho-L-threonyl-[protein] + ADP + H(+). Its activity is regulated as follows. Activated by Ca(2+)/calmodulin. Binding of calmodulin results in conformational change that relieves intrasteric autoinhibition and allows phosphorylation of Thr-196 within the activation loop by CaMKK1 or CaMKK2. Phosphorylation of Thr-196 results in a 10-20-fold increase in total activity to generate Ca(2+)/calmodulin-independent activity. Autophosphorylation of the N-terminus Ser-11 and Ser-12 is required for full activation. Inactivated by protein phosphatase 2A (PPP2CA/PPP2CB) which dephosphorylates Thr-196, thereby terminating autonomous activity and helping to maintain the enzyme in its autoinhibited state. Calcium/calmodulin-dependent protein kinase that operates in the calcium-triggered CaMKK-CaMK4 signaling cascade and regulates, mainly by phosphorylation, the activity of several transcription activators, such as CREB1, MEF2D, JUN and RORA, which play pivotal roles in immune response, inflammation, and memory consolidation. In the thymus, regulates the CD4(+)/CD8(+) double positive thymocytes selection threshold during T-cell ontogeny. In CD4 memory T-cells, is required to link T-cell antigen receptor (TCR) signaling to the production of IL2, IFNG and IL4 (through the regulation of CREB and MEF2). Regulates the differentiation and survival phases of osteoclasts and dendritic cells (DCs). Mediates DCs survival by linking TLR4 and the regulation of temporal expression of BCL2. Phosphorylates the transcription activator CREB1 on 'Ser-133' in hippocampal neuron nuclei and contribute to memory consolidation and long term potentiation (LTP) in the hippocampus. Can activate the MAP kinases MAPK1/ERK2, MAPK8/JNK1 and MAPK14/p38 and stimulate transcription through the phosphorylation of ELK1 and ATF2. Can also phosphorylate in vitro CREBBP, PRM2, MEF2A and STMN1/OP18. Functionally, heat-stable, acidic, calmodulin-binding protein. The chain is Calcium/calmodulin-dependent protein kinase type IV (Camk4) from Rattus norvegicus (Rat).